The primary structure comprises 259 residues: MKLNKRSVAHYALSDSPADHTGFLRSWGGPGSPPTPSGTGRRYWFVLKGNLLFSFETRESRVPLSLVVLEGCTVELAEAPVPEEFAFAIRFDAPGVRPHLLAADGQAAQEAWVKALSRASFGYMRLVVRELESQLQDARQSLALHRCASQRAVASCSKSQAPDHRAPDPENGHFLPRDRSSIGTVEERGIRPIGRDLTEWELQGPASLLLSMGQSPVSPESSCFSTLHDWYGKEIMELRRGWQQRAKGSQTENKSQNRP.

A PH domain is found at 17-121 (PADHTGFLRS…WVKALSRASF (105 aa)). Residues 124–150 (MRLVVRELESQLQDARQSLALHRCASQ) adopt a coiled-coil conformation. A disordered region spans residues 155-178 (SCSKSQAPDHRAPDPENGHFLPRD). Basic and acidic residues predominate over residues 161 to 178 (APDHRAPDPENGHFLPRD). The F&amp;H motif lies at 223 to 235 (CFSTLHDWYGKEI).

The protein belongs to the sesquipedalian family. Forms homodimers and heterodimers with PHETA1. Interacts with OCRL and INPP5B.

It localises to the early endosome. The protein resides in the recycling endosome. The protein localises to the golgi apparatus. It is found in the trans-Golgi network. Its subcellular location is the cytoplasmic vesicle. It localises to the clathrin-coated vesicle. Its function is as follows. Plays a role in endocytic trafficking. Required for receptor recycling from endosomes, both to the trans-Golgi network and the plasma membrane. The chain is Sesquipedalian-2 from Mus musculus (Mouse).